Here is a 196-residue protein sequence, read N- to C-terminus: Elongation factor Ts (196 aa).

The involved in Mg(2+) ion dislocation from EF-Tu stretch occupies residues 80 to 83 (TDFV).

The protein belongs to the EF-Ts family.

The protein localises to the cytoplasm. Functionally, associates with the EF-Tu.GDP complex and induces the exchange of GDP to GTP. It remains bound to the aminoacyl-tRNA.EF-Tu.GTP complex up to the GTP hydrolysis stage on the ribosome. The sequence is that of Elongation factor Ts from Thermosipho melanesiensis (strain DSM 12029 / CIP 104789 / BI429).